The primary structure comprises 138 residues: MKFTTLLFLAAVAGALVYAEDASSDSTGADPAQEAGTSKPNEEISGPAEPASPPETTTTAQETSAAAVQGTAKVTSSRQELNPLKSIVEKSILLTEQALAKAGKGMHGGVPGGKQFIENGSEFAQKLLKKFSLLKPWA.

Positions 1-19 are cleaved as a signal peptide; the sequence is MKFTTLLFLAAVAGALVYA. The tract at residues 20 to 79 is disordered; the sequence is EDASSDSTGADPAQEAGTSKPNEEISGPAEPASPPETTTTAQETSAAAVQGTAKVTSSRQ. Residues 43–67 are compositionally biased toward low complexity; it reads EISGPAEPASPPETTTTAQETSAAA. N-linked (GlcNAc...) asparagine glycosylation occurs at N119.

Expressed in secretory granules of many acinar cells in lacrimal gland and in scattered acinar cells of salivary glands.

It localises to the secreted. Its function is as follows. Modulates secretion by lacrimal acinar cells. In Homo sapiens (Human), this protein is Extracellular glycoprotein lacritin (LACRT).